The sequence spans 158 residues: SsrA-binding protein (158 aa).

It belongs to the SmpB family.

It localises to the cytoplasm. Required for rescue of stalled ribosomes mediated by trans-translation. Binds to transfer-messenger RNA (tmRNA), required for stable association of tmRNA with ribosomes. tmRNA and SmpB together mimic tRNA shape, replacing the anticodon stem-loop with SmpB. tmRNA is encoded by the ssrA gene; the 2 termini fold to resemble tRNA(Ala) and it encodes a 'tag peptide', a short internal open reading frame. During trans-translation Ala-aminoacylated tmRNA acts like a tRNA, entering the A-site of stalled ribosomes, displacing the stalled mRNA. The ribosome then switches to translate the ORF on the tmRNA; the nascent peptide is terminated with the 'tag peptide' encoded by the tmRNA and targeted for degradation. The ribosome is freed to recommence translation, which seems to be the essential function of trans-translation. This Bifidobacterium longum (strain DJO10A) protein is SsrA-binding protein.